An 894-amino-acid chain; its full sequence is Probable ion channel SYM8 (894 aa).

Residues 1–124 form a disordered region; that stretch reads MAKSNEEPNS…PPSLPIAITK (124 aa). Composition is skewed to polar residues over residues 7-16, 24-33, and 44-63; these read EPNSNLNTNK, TLAQQPSLNL, and IGNSSSSSTKTDFEQQQRNY. The next 4 helical transmembrane spans lie at 134–154, 204–224, 267–287, and 319–339; these read SPIFYLFVITCVIFVPYSAFL, TISLYIVLFTLVLPFILYKYI, LALLFATLFLIAFGGLALYAV, and IVSVSISAGGMLIFAMMLGLV. 2 RCK N-terminal domains span residues 360-501 and 620-769; these read RNHV…ETVV and PEKI…DKSI. Positions 390-415 form a coiled coil; it reads VIVVLAEKEKEEMEMDIAKLEFDFMG.

The protein belongs to the castor/pollux (TC 1.A.1.23) family. In terms of assembly, homotetramer.

The protein localises to the nucleus membrane. Required for both rhizobial and mycorrhizal symbiosis. Involved in Nod-factor-induced calcium spiking. May induce a change in membrane polarization that activates the opening of a calcium channel required for calcium spiking. Might be calcium gated. In Pisum sativum (Garden pea), this protein is Probable ion channel SYM8 (SYM8).